A 234-amino-acid polypeptide reads, in one-letter code: Uridylate kinase (234 aa).

Residues 8–11, Gly-51, and Arg-55 contribute to the ATP site; that span reads KLSG. Residues Asp-68 and 129-136 contribute to the UMP site; that span reads TSNPFFTT. Positions 156, 162, and 165 each coordinate ATP.

It belongs to the UMP kinase family. In terms of assembly, homohexamer.

It is found in the cytoplasm. It carries out the reaction UMP + ATP = UDP + ADP. Its pathway is pyrimidine metabolism; CTP biosynthesis via de novo pathway; UDP from UMP (UMPK route): step 1/1. Inhibited by UTP. Its function is as follows. Catalyzes the reversible phosphorylation of UMP to UDP. The protein is Uridylate kinase of Fervidobacterium nodosum (strain ATCC 35602 / DSM 5306 / Rt17-B1).